Here is an 848-residue protein sequence, read N- to C-terminus: Adenylate cyclase (848 aa).

The tract at residues 1–535 is catalytic; it reads MYLYIETLKQ…DVSHHFPLRL (535 aa). A regulatory region spans residues 541-848; the sequence is KALYSPCEIR…DTPLLQQYFS (308 aa). His609 is subject to Phosphohistidine; by CRR.

It belongs to the adenylyl cyclase class-1 family.

It localises to the cytoplasm. It carries out the reaction ATP = 3',5'-cyclic AMP + diphosphate. The regulatory domain is involved in the regulation of cyclase activity by the carbon source. Activated by the PTS system, glucose-specific IIA component (CRR). Catalyzes the formation of the second messenger cAMP from ATP. Its transcript is probably degraded by endoribonuclease LS (rnlA), decreasing cAMP levels and the negative regulator Crp-cAMP, which then induces its own transcription again. The sequence is that of Adenylate cyclase (cyaA) from Escherichia coli (strain K12).